The sequence spans 195 residues: Imidazoleglycerol-phosphate dehydratase (195 aa).

This sequence belongs to the imidazoleglycerol-phosphate dehydratase family.

The protein resides in the cytoplasm. The enzyme catalyses D-erythro-1-(imidazol-4-yl)glycerol 3-phosphate = 3-(imidazol-4-yl)-2-oxopropyl phosphate + H2O. It functions in the pathway amino-acid biosynthesis; L-histidine biosynthesis; L-histidine from 5-phospho-alpha-D-ribose 1-diphosphate: step 6/9. In Polynucleobacter necessarius subsp. necessarius (strain STIR1), this protein is Imidazoleglycerol-phosphate dehydratase.